A 110-amino-acid polypeptide reads, in one-letter code: Ribonuclease P protein component (110 aa).

The protein belongs to the RnpA family. In terms of assembly, consists of a catalytic RNA component (M1 or rnpB) and a protein subunit.

It catalyses the reaction Endonucleolytic cleavage of RNA, removing 5'-extranucleotides from tRNA precursor.. Functionally, RNaseP catalyzes the removal of the 5'-leader sequence from pre-tRNA to produce the mature 5'-terminus. It can also cleave other RNA substrates such as 4.5S RNA. The protein component plays an auxiliary but essential role in vivo by binding to the 5'-leader sequence and broadening the substrate specificity of the ribozyme. The protein is Ribonuclease P protein component of Mesoplasma florum (strain ATCC 33453 / NBRC 100688 / NCTC 11704 / L1) (Acholeplasma florum).